The primary structure comprises 1106 residues: Protein shuttle craft (1106 aa).

Disordered regions lie at residues 7-26 (QLTN…AMAD) and 189-371 (PAAA…KLSQ). Residues 189–201 (PAAATTNGNSTAS) are compositionally biased toward low complexity. Basic and acidic residues-rich tracts occupy residues 232–270 (NYER…RDSR) and 278–323 (RRSD…RDRI). A Phosphothreonine modification is found at threonine 335. Phosphoserine is present on residues serine 336, serine 339, serine 343, and serine 354. A compositionally biased stretch (polar residues) spans 336–354 (SNESAHPSPEKQSQLQQIS). Residues 386–433 (CLVCVEAIKSHQPTWSCRNCYHMLHLKCTITWASSSKSEVGWRCPACQ) form an RING-type; atypical zinc finger. 8 NF-X1-type zinc fingers span residues 474 to 492 (CSHA…PCQA), 527 to 546 (CGEH…ACSE), 585 to 604 (CGHH…PCKL), 644 to 667 (CGKP…PCPK), 706 to 725 (CGKH…DCPL), 733 to 752 (CGKH…PCYR), 844 to 867 (CGGH…ICRQ), and 876 to 896 (CGHK…PCKE). One can recognise an R3H domain in the interval 1006–1071 (TKSVYETLTD…NRNVVATAHK (66 aa)).

This sequence belongs to the NFX1 family. Ovaries and embryonic central nervous system.

The protein localises to the nucleus. Plays an essential role during the late stages of embryonic neurogenesis. May either fine-tune the guidance or the spatial maintenance of the migrating SNB and in nerve roots, which are composed of axons originating from distinct groups of motor neurons and may be required to either guide or maintain the position of these nerves along a direct and straight path to their ultimate targets in particular muscle fields. May play a role in egg chamber development and/or may confer essential maternal contributions to the early embryo. This is Protein shuttle craft (stc) from Drosophila melanogaster (Fruit fly).